We begin with the raw amino-acid sequence, 116 residues long: NADH-ubiquinone oxidoreductase chain 3 (116 aa).

The next 3 helical transmembrane spans lie at 3-23, 56-76, and 87-107; these read LITT…TISF, FFLI…LLPL, and LTLI…IYEW.

The protein belongs to the complex I subunit 3 family.

It is found in the mitochondrion membrane. It carries out the reaction a ubiquinone + NADH + 5 H(+)(in) = a ubiquinol + NAD(+) + 4 H(+)(out). In terms of biological role, core subunit of the mitochondrial membrane respiratory chain NADH dehydrogenase (Complex I) that is believed to belong to the minimal assembly required for catalysis. Complex I functions in the transfer of electrons from NADH to the respiratory chain. The immediate electron acceptor for the enzyme is believed to be ubiquinone. The polypeptide is NADH-ubiquinone oxidoreductase chain 3 (MT-ND3) (Oncorhynchus gorbuscha (Pink salmon)).